A 194-amino-acid chain; its full sequence is uncharacterized protein (194 aa).

The Exonuclease domain occupies 20–185; sequence RIFIDTETTG…ADCRMTLGII (166 aa).

This is an uncharacterized protein from Escherichia coli (Bacteriophage 186).